A 99-amino-acid polypeptide reads, in one-letter code: MAAAAASRAVGAKLGLREIRVHLCQRSPGSQGVRDFIVQRYVELKKAHPNLPILIRECSEVQPKLWARYAFGQEKTVSLNNLSADEVTRAMQNVLSGKA.

A2 is modified (N-acetylalanine). Residues C24 and C58 are joined by a disulfide bond. Position 64 is an N6-acetyllysine; alternate (K64). K64 is modified (N6-succinyllysine; alternate). K75 carries the N6-acetyllysine modification.

It belongs to the complex I NDUFA2 subunit family. Complex I is composed of 45 different subunits. In terms of processing, acetylation of Lys-64 and Lys-75 is observed in liver mitochondria from fasted mice but not from fed mice.

The protein localises to the mitochondrion inner membrane. Its function is as follows. Accessory subunit of the mitochondrial membrane respiratory chain NADH dehydrogenase (Complex I), that is believed not to be involved in catalysis. Complex I functions in the transfer of electrons from NADH to the respiratory chain. The immediate electron acceptor for the enzyme is believed to be ubiquinone. The protein is NADH dehydrogenase [ubiquinone] 1 alpha subcomplex subunit 2 (Ndufa2) of Mus musculus (Mouse).